A 295-amino-acid polypeptide reads, in one-letter code: MTKLIVICGATATGKSGLALNLAMRLGSVILSADSRQVYREFDIGTAKPTLAEQRAVPHYLIDICAPRETMTVADYQEQAQALINSLPVSPLLLVGGTGLYIRSIVQGMKIPRVAPNYELRSQLASLGQTTLYGILQQVDPIAAQKIHPNDPVRTLRAVEVFYITGIPISAQQGENPPDYPILQIGLDCEMERLTERIHKRTEQMITDGLVGEVEYLCQKYGAELPLLNTLGYQEIKQYLTGEISLEAAKELTVLHTRQFAKRQRTWFRASPQIEWFNADHPDLLDIVCQHIQQP.

Residue 9–16 (GATATGKS) participates in ATP binding. Residue 11–16 (TATGKS) participates in substrate binding. The tract at residues 34–37 (DSRQ) is interaction with substrate tRNA.

Belongs to the IPP transferase family. Monomer. The cofactor is Mg(2+).

The enzyme catalyses adenosine(37) in tRNA + dimethylallyl diphosphate = N(6)-dimethylallyladenosine(37) in tRNA + diphosphate. Catalyzes the transfer of a dimethylallyl group onto the adenine at position 37 in tRNAs that read codons beginning with uridine, leading to the formation of N6-(dimethylallyl)adenosine (i(6)A). The polypeptide is tRNA dimethylallyltransferase (Nostoc sp. (strain PCC 7120 / SAG 25.82 / UTEX 2576)).